A 156-amino-acid chain; its full sequence is Small ribosomal subunit protein uS7c (156 aa).

This sequence belongs to the universal ribosomal protein uS7 family. In terms of assembly, part of the 30S ribosomal subunit.

It localises to the plastid. Its subcellular location is the chloroplast. Its function is as follows. One of the primary rRNA binding proteins, it binds directly to 16S rRNA where it nucleates assembly of the head domain of the 30S subunit. The chain is Small ribosomal subunit protein uS7c (rps7) from Chlorokybus atmophyticus (Soil alga).